Here is a 196-residue protein sequence, read N- to C-terminus: ATP-dependent Clp protease proteolytic subunit (196 aa).

Ser101 acts as the Nucleophile in catalysis. Residue His126 is part of the active site.

This sequence belongs to the peptidase S14 family. In terms of assembly, component of the chloroplastic Clp protease core complex.

The protein resides in the plastid. The protein localises to the chloroplast stroma. It catalyses the reaction Hydrolysis of proteins to small peptides in the presence of ATP and magnesium. alpha-casein is the usual test substrate. In the absence of ATP, only oligopeptides shorter than five residues are hydrolyzed (such as succinyl-Leu-Tyr-|-NHMec, and Leu-Tyr-Leu-|-Tyr-Trp, in which cleavage of the -Tyr-|-Leu- and -Tyr-|-Trp bonds also occurs).. Its function is as follows. Cleaves peptides in various proteins in a process that requires ATP hydrolysis. Has a chymotrypsin-like activity. Plays a major role in the degradation of misfolded proteins. This chain is ATP-dependent Clp protease proteolytic subunit, found in Barbarea verna (Land cress).